Consider the following 548-residue polypeptide: Folylpolyglutamate synthase (548 aa).

130-133 is an ATP binding site; that stretch reads GKGS. Residues Ser157, Glu234, and His262 each contribute to the Mg(2+) site. ATP is bound by residues Arg382 and Asp396.

Belongs to the folylpolyglutamate synthase family. It depends on a monovalent cation as a cofactor.

It localises to the mitochondrion inner membrane. The protein resides in the mitochondrion matrix. It is found in the cytoplasm. The catalysed reaction is (6S)-5,6,7,8-tetrahydrofolyl-(gamma-L-Glu)(n) + L-glutamate + ATP = (6S)-5,6,7,8-tetrahydrofolyl-(gamma-L-Glu)(n+1) + ADP + phosphate + H(+). The protein operates within cofactor biosynthesis; tetrahydrofolylpolyglutamate biosynthesis. Functionally, catalyzes conversion of folates to polyglutamate derivatives allowing concentration of folate compounds in the cell and the intracellular retention of these cofactors, which are important substrates for most of the folate-dependent enzymes that are involved in one-carbon transfer reactions involved in purine, pyrimidine and amino acid synthesis. Required for methionine synthesis and maintenance of intact mitochondrial DNA. Involved in telomere maintenance. This is Folylpolyglutamate synthase from Saccharomyces cerevisiae (strain AWRI1631) (Baker's yeast).